Consider the following 98-residue polypeptide: Protein S100-A11 (98 aa).

Position 5 is a phosphothreonine (threonine 5). EF-hand domains follow at residues 12–47 (LIAV…AFTK) and 50–85 (KDPG…LAIA). The residue at position 22 (lysine 22) is an N6-acetyllysine. Residues serine 26, histidine 28, glutamate 33, aspartate 63, asparagine 65, aspartate 67, glutamine 69, and glutamate 74 each contribute to the Ca(2+) site.

The protein belongs to the S-100 family. As to quaternary structure, homodimer; disulfide-linked. In terms of processing, phosphorylation at Thr-5 significantly suppresses homodimerization and promotes association with NCL/nucleolin which induces nuclear translocation.

The protein resides in the cytoplasm. Its subcellular location is the nucleus. Functionally, facilitates the differentiation and the cornification of keratinocytes. This chain is Protein S100-A11 (S100a11), found in Rattus norvegicus (Rat).